Reading from the N-terminus, the 600-residue chain is Terpenoid synthase 8 (600 aa).

Residues Asp-352, Asp-356, Asn-497, and Asp-505 each coordinate Mg(2+). A DDXXD motif motif is present at residues 352 to 356; it reads DDTCD.

It belongs to the terpene synthase family. Tpsa subfamily. Mg(2+) serves as cofactor. Mn(2+) is required as a cofactor. In terms of tissue distribution, stele, and tips of primary and secondary root.

The protein localises to the plastid. The enzyme catalyses (2E,6E,10E)-geranylgeranyl diphosphate = rhizathalene A + diphosphate. Its pathway is secondary metabolite biosynthesis; terpenoid biosynthesis. Catalyzes the synthesis of the semivolatile diterpene rhizatalene A. This chain is Terpenoid synthase 8 (TPS08), found in Arabidopsis thaliana (Mouse-ear cress).